The primary structure comprises 274 residues: MRLVILETSQSVGKWAAKYVMKRINDFQPGPNRYFVLGLPTGSTPLGMYKELIEFHKQGKVSFQYVKTFNMDEYVGLPRDHQESYHFFMWHNFFKHIDIEPQNVHILNGNAPDLVAECNKFEEQIKEAGGVELFIGGIGPDGHIAFNEPGSSLVSRTRVKTLAQDTLEANARFFDNDMSKVPKQALTVGVGTVMDSKEVMILITGAHKAFALYKAIEEGVNHMWTVSAFQQHANTLMICDEDATLELRVKTVKYFKGILRDIDEGAATQDGYKN.

The Proton acceptor; for enolization step role is filled by Asp72. The active-site For ring-opening step is the Asp141. The active-site Proton acceptor; for ring-opening step is His143. Residue Glu148 is the For ring-opening step of the active site.

This sequence belongs to the glucosamine/galactosamine-6-phosphate isomerase family. In terms of assembly, homohexamer.

It is found in the cytoplasm. The enzyme catalyses alpha-D-glucosamine 6-phosphate + H2O = beta-D-fructose 6-phosphate + NH4(+). It participates in nucleotide-sugar biosynthesis; UDP-N-acetyl-alpha-D-glucosamine biosynthesis; alpha-D-glucosamine 6-phosphate from D-fructose 6-phosphate: step 1/1. Catalyzes the reversible conversion of alpha-D-glucosamine 6-phosphate (GlcN-6P) into beta-D-fructose 6-phosphate (Fru-6P) and ammonium ion, a regulatory reaction step in de novo uridine diphosphate-N-acetyl-alpha-D-glucosamine (UDP-GlcNAc) biosynthesis via hexosamine pathway. The sequence is that of Glucosamine-6-phosphate deaminase from Drosophila pseudoobscura pseudoobscura (Fruit fly).